Reading from the N-terminus, the 354-residue chain is 4-hydroxy-2-oxovalerate aldolase 5 (354 aa).

The 253-residue stretch at 11-263 folds into the Pyruvate carboxyltransferase domain; sequence VTVHDMCLRD…ETGCDLFKLM (253 aa). 19–20 lines the substrate pocket; it reads RD. A Mn(2+)-binding site is contributed by Asp-20. The active-site Proton acceptor is His-23. The substrate site is built by Ser-173 and His-202. 2 residues coordinate Mn(2+): His-202 and His-204. Tyr-293 lines the substrate pocket.

It belongs to the 4-hydroxy-2-oxovalerate aldolase family.

The enzyme catalyses (S)-4-hydroxy-2-oxopentanoate = acetaldehyde + pyruvate. The protein is 4-hydroxy-2-oxovalerate aldolase 5 of Dechloromonas aromatica (strain RCB).